The chain runs to 360 residues: NADH-quinone oxidoreductase subunit H (360 aa).

The next 8 membrane-spanning stretches (helical) occupy residues 20–40 (GMVW…IPLM), 95–115 (GLFV…WVVI), 130–150 (LLLV…AGWA), 176–196 (FCLL…IVLA), 206–226 (GIGF…VYLI), 261–281 (IFFL…ALMF), 297–317 (IPGW…FIWI), and 336–356 (IFIP…LSPW).

The protein belongs to the complex I subunit 1 family. As to quaternary structure, NDH-1 is composed of 14 different subunits. Subunits NuoA, H, J, K, L, M, N constitute the membrane sector of the complex.

It localises to the cell inner membrane. The enzyme catalyses a quinone + NADH + 5 H(+)(in) = a quinol + NAD(+) + 4 H(+)(out). Its function is as follows. NDH-1 shuttles electrons from NADH, via FMN and iron-sulfur (Fe-S) centers, to quinones in the respiratory chain. The immediate electron acceptor for the enzyme in this species is believed to be ubiquinone. Couples the redox reaction to proton translocation (for every two electrons transferred, four hydrogen ions are translocated across the cytoplasmic membrane), and thus conserves the redox energy in a proton gradient. This subunit may bind ubiquinone. This chain is NADH-quinone oxidoreductase subunit H, found in Verminephrobacter eiseniae (strain EF01-2).